The sequence spans 197 residues: FMN-dependent NADH:quinone oxidoreductase (197 aa).

FMN is bound by residues Ser10 and 16 to 18; that span reads SIS.

The protein belongs to the azoreductase type 1 family. In terms of assembly, homodimer. It depends on FMN as a cofactor.

The enzyme catalyses 2 a quinone + NADH + H(+) = 2 a 1,4-benzosemiquinone + NAD(+). It catalyses the reaction N,N-dimethyl-1,4-phenylenediamine + anthranilate + 2 NAD(+) = 2-(4-dimethylaminophenyl)diazenylbenzoate + 2 NADH + 2 H(+). Functionally, quinone reductase that provides resistance to thiol-specific stress caused by electrophilic quinones. Its function is as follows. Also exhibits azoreductase activity. Catalyzes the reductive cleavage of the azo bond in aromatic azo compounds to the corresponding amines. The polypeptide is FMN-dependent NADH:quinone oxidoreductase (Erythrobacter litoralis (strain HTCC2594)).